Here is a 174-residue protein sequence, read N- to C-terminus: Gamma-crystallin C (174 aa).

Beta/gamma crystallin 'Greek key' domains are found at residues 2–40 (GKIT…RVES) and 41–83 (GCWM…CLIP). S-methylcysteine is present on cysteine 23. A connecting peptide region spans residues 84–87 (QTVS). Beta/gamma crystallin 'Greek key' domains are found at residues 88-128 (HRLR…HVLE) and 129-171 (GCWV…RRVV).

Belongs to the beta/gamma-crystallin family. Monomer.

Functionally, crystallins are the dominant structural components of the vertebrate eye lens. In Homo sapiens (Human), this protein is Gamma-crystallin C (CRYGC).